The chain runs to 310 residues: MSYVKKDLISTKDLSKDDIFSILSLAKDYKALNLEPVKKDPILKGVTVVNAFFENSTRTRTSFEIAAKRLGADAINFSSSTSSTNKGETLIDTIHNIEAMKTDIFIVRHYSSGAAKFVTKNTPSCVVNAGDGCNEHPTQALLDLLTIYEAKGSFSGLSVTIIGDIFHSRVARSNIYAMQTLGIKVKLFGPPMFMQNAEVFGCHICKDMDEAVMGSDAIIMLRIQLERSDGEVAFPSIREYSKYFGLTKTRMQKAKDDVIILHPGPINRGVEINSDVADDARFSSILDQVENGVAIRMAVLKTIYQNKFKA.

Positions 58 and 59 each coordinate carbamoyl phosphate. Residue K86 participates in L-aspartate binding. Positions 108, 136, and 139 each coordinate carbamoyl phosphate. 2 residues coordinate L-aspartate: R169 and R222. G264 and P265 together coordinate carbamoyl phosphate.

It belongs to the aspartate/ornithine carbamoyltransferase superfamily. ATCase family. In terms of assembly, heterododecamer (2C3:3R2) of six catalytic PyrB chains organized as two trimers (C3), and six regulatory PyrI chains organized as three dimers (R2).

The enzyme catalyses carbamoyl phosphate + L-aspartate = N-carbamoyl-L-aspartate + phosphate + H(+). Its pathway is pyrimidine metabolism; UMP biosynthesis via de novo pathway; (S)-dihydroorotate from bicarbonate: step 2/3. Catalyzes the condensation of carbamoyl phosphate and aspartate to form carbamoyl aspartate and inorganic phosphate, the committed step in the de novo pyrimidine nucleotide biosynthesis pathway. The protein is Aspartate carbamoyltransferase catalytic subunit of Campylobacter fetus subsp. fetus (strain 82-40).